A 444-amino-acid chain; its full sequence is DNA primase DnaG (444 aa).

Residues 173-250 enclose the Toprim domain; sequence DAILIVEGRS…YVTRAPRGLE (78 aa). Mg(2+)-binding residues include Glu-179, Asp-221, and Asp-223. A disordered region spans residues 302–354; the sequence is VTSSVNKTDKYSQKNESKQFKQQKNENKQVKDNSKEKTQKSTEKHNETEETHL. The segment covering 308-354 has biased composition (basic and acidic residues); it reads KTDKYSQKNESKQFKQQKNENKQVKDNSKEKTQKSTEKHNETEETHL.

This sequence belongs to the archaeal DnaG primase family. Forms a ternary complex with MCM helicase and DNA. Component of the archaeal exosome complex. Mg(2+) is required as a cofactor.

It catalyses the reaction ssDNA + n NTP = ssDNA/pppN(pN)n-1 hybrid + (n-1) diphosphate.. In terms of biological role, RNA polymerase that catalyzes the synthesis of short RNA molecules used as primers for DNA polymerase during DNA replication. Also part of the exosome, which is a complex involved in RNA degradation. Acts as a poly(A)-binding protein that enhances the interaction between heteromeric, adenine-rich transcripts and the exosome. The sequence is that of DNA primase DnaG from Methanosphaera stadtmanae (strain ATCC 43021 / DSM 3091 / JCM 11832 / MCB-3).